The chain runs to 333 residues: Glyceraldehyde-3-phosphate dehydrogenase 1 (333 aa).

Residues 12-13 (RI), Asp35, and Arg79 each bind NAD(+). D-glyceraldehyde 3-phosphate contacts are provided by residues 152–154 (SCT), Thr183, Arg198, 211–212 (SG), and Arg234. The active-site Nucleophile is Cys153. Asn314 contacts NAD(+).

The protein belongs to the glyceraldehyde-3-phosphate dehydrogenase family. In terms of assembly, homotetramer.

The protein resides in the cytoplasm. It catalyses the reaction D-glyceraldehyde 3-phosphate + phosphate + NAD(+) = (2R)-3-phospho-glyceroyl phosphate + NADH + H(+). The protein operates within carbohydrate degradation; glycolysis; pyruvate from D-glyceraldehyde 3-phosphate: step 1/5. With respect to regulation, resistant to pentalenolactone (PL). Its function is as follows. Catalyzes the oxidative phosphorylation of glyceraldehyde 3-phosphate (G3P) to 1,3-bisphosphoglycerate (BPG) using the cofactor NAD. The first reaction step involves the formation of a hemiacetal intermediate between G3P and a cysteine residue, and this hemiacetal intermediate is then oxidized to a thioester, with concomitant reduction of NAD to NADH. The reduced NADH is then exchanged with the second NAD, and the thioester is attacked by a nucleophilic inorganic phosphate to produce BPG. This Streptomyces arenae protein is Glyceraldehyde-3-phosphate dehydrogenase 1 (gap1).